Consider the following 522-residue polypeptide: Glucose-1-phosphate adenylyltransferase large subunit, chloroplastic/amyloplastic (522 aa).

The N-terminal 62 residues, 1-62 (MSSMQFSSVL…RGPAATGAQC (62 aa)), are a transit peptide targeting the chloroplast. A compositionally biased stretch (basic and acidic residues) spans 28 to 42 (SERLKVGDSSSIRHE). The tract at residues 28–54 (SERLKVGDSSSIRHERASRRMCNGGRG) is disordered.

It belongs to the bacterial/plant glucose-1-phosphate adenylyltransferase family. As to quaternary structure, heterotetramer. In terms of tissue distribution, abundantly expressed in the whole grains, a slightly less abundant expression is seen in leaves, while a low level expression is seen in the roots. A greater expression is seen in the endosperm than in the embryo and pericarp layers.

The protein localises to the plastid. The protein resides in the chloroplast. Its subcellular location is the amyloplast. It catalyses the reaction alpha-D-glucose 1-phosphate + ATP + H(+) = ADP-alpha-D-glucose + diphosphate. It functions in the pathway glycan biosynthesis; starch biosynthesis. Its activity is regulated as follows. Insensitive to 3'phosphoglycerate and orthophosphate. Functionally, this protein plays a role in synthesis of starch. It catalyzes the synthesis of the activated glycosyl donor, ADP-glucose from Glc-1-P and ATP. This Triticum aestivum (Wheat) protein is Glucose-1-phosphate adenylyltransferase large subunit, chloroplastic/amyloplastic (AGP-L).